The chain runs to 506 residues: uncharacterized protein (506 aa).

2 disordered regions span residues 104-144 and 397-456; these read PNSS…ATSS and QQQK…DQLP. Low complexity predominate over residues 130–144; sequence ESSPTLSSSSLATSS. A compositionally biased stretch (basic and acidic residues) spans 405–443; that stretch reads IKDEDKNEKENKSENEEKEKEKEKEKEKEKEKEKEKEKE. Residues 405–455 are a coiled coil; sequence IKDEDKNEKENKSENEEKEKEKEKEKEKEKEKEKEKEKENEEGEEDNGDQL.

This is an uncharacterized protein from Dictyostelium discoideum (Social amoeba).